The primary structure comprises 423 residues: 3-phosphoshikimate 1-carboxyvinyltransferase (423 aa).

Residues Lys-21, Ser-22, and Arg-26 each contribute to the 3-phosphoshikimate site. A phosphoenolpyruvate-binding site is contributed by Lys-21. Phosphoenolpyruvate contacts are provided by Gly-92 and Arg-120. Ser-164, Gln-166, Asp-312, and Lys-339 together coordinate 3-phosphoshikimate. Residue Gln-166 participates in phosphoenolpyruvate binding. The active-site Proton acceptor is Asp-312. Positions 343 and 385 each coordinate phosphoenolpyruvate.

This sequence belongs to the EPSP synthase family. Monomer.

It localises to the cytoplasm. The enzyme catalyses 3-phosphoshikimate + phosphoenolpyruvate = 5-O-(1-carboxyvinyl)-3-phosphoshikimate + phosphate. It participates in metabolic intermediate biosynthesis; chorismate biosynthesis; chorismate from D-erythrose 4-phosphate and phosphoenolpyruvate: step 6/7. Catalyzes the transfer of the enolpyruvyl moiety of phosphoenolpyruvate (PEP) to the 5-hydroxyl of shikimate-3-phosphate (S3P) to produce enolpyruvyl shikimate-3-phosphate and inorganic phosphate. This Thermoanaerobacter pseudethanolicus (strain ATCC 33223 / 39E) (Clostridium thermohydrosulfuricum) protein is 3-phosphoshikimate 1-carboxyvinyltransferase.